Reading from the N-terminus, the 395-residue chain is FAD-dependent urate hydroxylase (395 aa).

FAD is bound by residues Gly-11, 30–31 (ER), Ser-43, and Met-125. Substrate contacts are provided by residues Asn-180, Arg-206, and 218 to 220 (YFF). FAD is bound by residues Asp-287 and 297–301 (GQGGC).

Belongs to the FAD-dependent urate hydroxylase family. In terms of assembly, monomer. FAD is required as a cofactor.

It catalyses the reaction urate + NADH + O2 + H(+) = 5-hydroxyisourate + NAD(+) + H2O. It participates in purine metabolism; urate degradation. Its function is as follows. Catalyzes the hydroxylation of urate to 5-hydroxyisourate (HIU). Is likely to be involved in the urate degradation pathway to allantoin. Prefers NADH over NADPH as the electron donor. The polypeptide is FAD-dependent urate hydroxylase (Mycolicibacterium vanbaalenii (strain DSM 7251 / JCM 13017 / BCRC 16820 / KCTC 9966 / NRRL B-24157 / PYR-1) (Mycobacterium vanbaalenii)).